Reading from the N-terminus, the 376-residue chain is Alpha-ketoglutarate-dependent dioxygenase esdpJ (376 aa).

Fe cation is bound by residues His145 and Asp147. Thr202 provides a ligand contact to 2-oxoglutarate. Residues 234 to 260 (YNQSSQEKKSEIHVEPRGSPNNVGSDL) are disordered. The span at 239 to 249 (QEKKSEIHVEP) shows a compositional bias: basic and acidic residues. His335 is a Fe cation binding site. 2 residues coordinate 2-oxoglutarate: Arg347 and Arg351. A disordered region spans residues 354–376 (GVGEQPYLDPESKTRREALGEFN). Basic and acidic residues predominate over residues 363-376 (PESKTRREALGEFN).

This sequence belongs to the TfdA dioxygenase family. Requires Fe(2+) as cofactor.

Alpha-ketoglutarate-dependent dioxygenas; part of the cluster that mediates the biosynthesis of shearones, diterpenoid pyrones (DPs) which are structurally diverse meroterpenoids consisting of a diterpene linked by a pyrone, and which may exhibit a range of bioactivities. The alpha-ketoglutarate-dependent dioxygenase esdpJ seems not to be involved in this pathway. The molecular scaffold is commonly biosynthesized by a series of enzymes including the non-reducing polyketide synthase (NR-PKS) esdpA that generates an alpha-pyrone; the prenyltransferase esdpC that attaches a geranylgeranyl pyrophosphate (GGPP) produced by the GGPP synthase (GGPPS) esdpD onto the pyrone unit; the FAD-dependent monooxygenase esdpE that converts an olefin on the diterpene unit into an epoxide; and the terpene cyclase esdpB that catalyzes the cyclization reactions to give the molecular backbone shearone A. In the modification steps, esdpF oxidizes the hydroxy group to a ketone at C-3 and esdpG then attaches hydroxy groups at both C-11 and C-12. After that, esdpI hydroxylates at C-20 and esdpH hydroxylates at C-6'. The ether bridge is generated by nucleophilic attack of the hydroxy group at C-20 to the carbonyl carbon at C-3. EsdpH can also functions prior to esdpI. The different combinations of these modification enzymes lead to the production of diverse shearone derivatives, shearone I being the end product of the pathway. The sequence is that of Alpha-ketoglutarate-dependent dioxygenase esdpJ from Penicillium shearii (Eupenicillium shearii).